A 210-amino-acid chain; its full sequence is Superoxide dismutase [Mn], mitochondrial (210 aa).

Mn(2+)-binding residues include histidine 29, histidine 77, aspartate 164, and histidine 168.

It belongs to the iron/manganese superoxide dismutase family. In terms of assembly, homotetramer. Requires Mn(2+) as cofactor.

It is found in the mitochondrion matrix. It carries out the reaction 2 superoxide + 2 H(+) = H2O2 + O2. Its function is as follows. Destroys superoxide anion radicals which are normally produced within the cells and which are toxic to biological systems. The sequence is that of Superoxide dismutase [Mn], mitochondrial (sodB) from Aspergillus niger.